We begin with the raw amino-acid sequence, 229 residues long: Urease accessory protein UreF (229 aa).

Belongs to the UreF family. In terms of assembly, ureD, UreF and UreG form a complex that acts as a GTP-hydrolysis-dependent molecular chaperone, activating the urease apoprotein by helping to assemble the nickel containing metallocenter of UreC. The UreE protein probably delivers the nickel.

It is found in the cytoplasm. Its function is as follows. Required for maturation of urease via the functional incorporation of the urease nickel metallocenter. In Staphylococcus aureus (strain bovine RF122 / ET3-1), this protein is Urease accessory protein UreF.